The following is a 430-amino-acid chain: Glutamate-1-semialdehyde 2,1-aminomutase (430 aa).

Position 265 is an N6-(pyridoxal phosphate)lysine (Lys-265).

This sequence belongs to the class-III pyridoxal-phosphate-dependent aminotransferase family. HemL subfamily. As to quaternary structure, homodimer. Requires pyridoxal 5'-phosphate as cofactor.

It is found in the cytoplasm. It carries out the reaction (S)-4-amino-5-oxopentanoate = 5-aminolevulinate. Its pathway is porphyrin-containing compound metabolism; protoporphyrin-IX biosynthesis; 5-aminolevulinate from L-glutamyl-tRNA(Glu): step 2/2. This is Glutamate-1-semialdehyde 2,1-aminomutase from Shewanella putrefaciens (strain CN-32 / ATCC BAA-453).